The following is a 282-amino-acid chain: Pantothenate synthetase (282 aa).

Residue 30 to 37 (MGYLHEGH) coordinates ATP. H37 serves as the catalytic Proton donor. Q61 provides a ligand contact to (R)-pantoate. Q61 serves as a coordination point for beta-alanine. Residue 147 to 150 (GQKD) participates in ATP binding. Position 153 (Q153) interacts with (R)-pantoate. ATP-binding positions include V176 and 184–187 (MSSR).

This sequence belongs to the pantothenate synthetase family. Homodimer.

The protein resides in the cytoplasm. It catalyses the reaction (R)-pantoate + beta-alanine + ATP = (R)-pantothenate + AMP + diphosphate + H(+). It functions in the pathway cofactor biosynthesis; (R)-pantothenate biosynthesis; (R)-pantothenate from (R)-pantoate and beta-alanine: step 1/1. Functionally, catalyzes the condensation of pantoate with beta-alanine in an ATP-dependent reaction via a pantoyl-adenylate intermediate. This chain is Pantothenate synthetase, found in Caldicellulosiruptor bescii (strain ATCC BAA-1888 / DSM 6725 / KCTC 15123 / Z-1320) (Anaerocellum thermophilum).